A 285-amino-acid polypeptide reads, in one-letter code: 3-methyl-2-oxobutanoate hydroxymethyltransferase 1 (285 aa).

Aspartate 49 and aspartate 88 together coordinate Mg(2+). Residues aspartate 49–serine 50, aspartate 88, and lysine 118 contribute to the 3-methyl-2-oxobutanoate site. Residue glutamate 120 coordinates Mg(2+). Glutamate 187 acts as the Proton acceptor in catalysis.

This sequence belongs to the PanB family. In terms of assembly, homodecamer; pentamer of dimers. The cofactor is Mg(2+).

The protein resides in the cytoplasm. It catalyses the reaction 3-methyl-2-oxobutanoate + (6R)-5,10-methylene-5,6,7,8-tetrahydrofolate + H2O = 2-dehydropantoate + (6S)-5,6,7,8-tetrahydrofolate. It functions in the pathway cofactor biosynthesis; (R)-pantothenate biosynthesis; (R)-pantoate from 3-methyl-2-oxobutanoate: step 1/2. Its function is as follows. Catalyzes the reversible reaction in which hydroxymethyl group from 5,10-methylenetetrahydrofolate is transferred onto alpha-ketoisovalerate to form ketopantoate. This Burkholderia lata (strain ATCC 17760 / DSM 23089 / LMG 22485 / NCIMB 9086 / R18194 / 383) protein is 3-methyl-2-oxobutanoate hydroxymethyltransferase 1.